A 174-amino-acid chain; its full sequence is Protein MOTHER of FT and TFL1 homolog 2 (174 aa).

The protein belongs to the phosphatidylethanolamine-binding protein family.

Functionally, may form complexes with phosphorylated ligands by interfering with kinases and their effectors. The polypeptide is Protein MOTHER of FT and TFL1 homolog 2 (Oryza sativa subsp. japonica (Rice)).